The sequence spans 311 residues: Porphobilinogen deaminase (311 aa).

Position 240 is an S-(dipyrrolylmethanemethyl)cysteine (Cys-240).

This sequence belongs to the HMBS family. In terms of assembly, monomer. Dipyrromethane serves as cofactor.

It carries out the reaction 4 porphobilinogen + H2O = hydroxymethylbilane + 4 NH4(+). It participates in porphyrin-containing compound metabolism; protoporphyrin-IX biosynthesis; coproporphyrinogen-III from 5-aminolevulinate: step 2/4. Functionally, tetrapolymerization of the monopyrrole PBG into the hydroxymethylbilane pre-uroporphyrinogen in several discrete steps. This Natranaerobius thermophilus (strain ATCC BAA-1301 / DSM 18059 / JW/NM-WN-LF) protein is Porphobilinogen deaminase.